The following is a 294-amino-acid chain: 4-hydroxy-tetrahydrodipicolinate synthase (294 aa).

Thr47 provides a ligand contact to pyruvate. The active-site Proton donor/acceptor is the Tyr135. Lys163 (schiff-base intermediate with substrate) is an active-site residue. Ile206 provides a ligand contact to pyruvate.

The protein belongs to the DapA family. In terms of assembly, homodimer.

The protein localises to the cytoplasm. It carries out the reaction L-aspartate 4-semialdehyde + pyruvate = (2S,4S)-4-hydroxy-2,3,4,5-tetrahydrodipicolinate + H2O + H(+). It functions in the pathway amino-acid biosynthesis; L-lysine biosynthesis via DAP pathway; (S)-tetrahydrodipicolinate from L-aspartate: step 3/4. Functionally, catalyzes the condensation of (S)-aspartate-beta-semialdehyde [(S)-ASA] and pyruvate to 4-hydroxy-tetrahydrodipicolinate (HTPA). The protein is 4-hydroxy-tetrahydrodipicolinate synthase of Staphylococcus carnosus (strain TM300).